A 220-amino-acid chain; its full sequence is Large ribosomal subunit protein bL21 (220 aa).

The segment at 109–158 (SKKVAAKPATSEEKAAEEKPAKAKKEAAEKGASPRETKAAPLFSAPEGEP) is disordered. The segment covering 118–146 (TSEEKAAEEKPAKAKKEAAEKGASPRETK) has biased composition (basic and acidic residues).

The protein belongs to the bacterial ribosomal protein bL21 family. Part of the 50S ribosomal subunit. Contacts protein L20.

Functionally, this protein binds to 23S rRNA in the presence of protein L20. The polypeptide is Large ribosomal subunit protein bL21 (Chelativorans sp. (strain BNC1)).